A 1005-amino-acid polypeptide reads, in one-letter code: MDGLPKDEAFLWQSSKDNKENGVWSDVQSYGVSNPLWMAVFDYEPTAEEELTLRRGDLVEILSKDSTVSGDEGWWTGKIKDKVGIFPSNYVVSDDKYTTLTGAPKQCPLPLEIEFDELNLDEIIGVGGFGKVYKGLWRDEEVAVKAVRHDPDEDINVTAENVRQEAKIFCMLCHPNIIALTGVCLKPPHLCLVMEYARGGPLHRALAGKKVPAHVLVNWAVQIAKGMTYLHNEAIVPIIHRDLGSSNILILEKAENDDLFNKTLNITDFGLAREWQKTTKMSAAGTYAWMAPEVIRLSLFSKSSDVWSFGVLLWELLTGEVPYREIDALAVAYGVAMNKLTLPIPSTCPEPFVRILEACWDPDPHSRPTFSCILEQLTTIEQSAMFQMPLESFHSLQEDWRLEIQQMFDELRTKEKELRSREEELVRAAEEQRILEDLLKRREQELAEREIDIVERELNIIMYQMYQEKPKVKKRKGNFKKSRLKLKDGNRISLPSGFEHKITVQASPMLDKCKGQGTSSYSPPGSPLIIPRLRAIRLTPVDGSKTWGRSSVLKKEEVTTSNKKKGRTWGPSSTQQKERVGGEERLKTLGEGNKQWSSSAPNLGKSPKHTPISVGFASLTEMEEYADSDGSVPQSPYSQSYLTLPVQSDHRSHPEDTAHAGAPSSDSPKRGSQSRRKSELVLLGCASLLAAVALGSDLSELVPQEEKRKGIFQWAGRGPRRRASSPSRSMSYGEDSVIPSSSVTLISLSSISDCNSTRSLIRSDSDDIGLDHDNVSSGRGVKEDRGQQPNVGSNPLVDYKVESFKRDPKQSLTPTHVTVGRNNTTETRGHRRTPSDGAIRQVTQGHKRSPSDGSTPYQCEPEPSPFPRLPDPHFVFPPPVRRKDTGVERPTSLEFAPRPRPSSNRPRMDPWKFVSLSQTHSSSPSSGGGDACSSGSAEGAQVADVEETLLDMEVEGQRLDSTVPLCGLGLRPTTDPFFKYGNRRVLMKELSISLLQYKVESGVLL.

The SH3 domain maps to 32–96 (VSNPLWMAVF…PSNYVVSDDK (65 aa)). Positions 118–380 (LNLDEIIGVG…SCILEQLTTI (263 aa)) constitute a Protein kinase domain. ATP-binding positions include 124-132 (IGVGGFGKV) and K145. D242 (proton acceptor) is an active-site residue. 2 leucine-zipper regions span residues 404–425 (IQQMFDELRTKEKELRSREEEL) and 439–460 (LKRREQELAEREIDIVERELNI). Disordered stretches follow at residues 551-611 (SVLK…KHTP), 647-676 (QSDHRSHPEDTAHAGAPSSDSPKRGSQSRR), 712-736 (FQWAGRGPRRRASSPSRSMSYGEDS), and 758-940 (RSLI…AEGA). Composition is skewed to basic and acidic residues over residues 576–588 (QKERVGGEERLKT) and 648–658 (SDHRSHPEDTA). Basic and acidic residues-rich tracts occupy residues 761-786 (IRSDSDDIGLDHDNVSSGRGVKEDRG) and 799-809 (YKVESFKRDPK). Residues 810–826 (QSLTPTHVTVGRNNTTE) show a composition bias toward polar residues. Residues 862–879 (EPSPFPRLPDPHFVFPPP) are compositionally biased toward pro residues. A compositionally biased stretch (low complexity) spans 915-940 (SLSQTHSSSPSSGGGDACSSGSAEGA).

This sequence belongs to the protein kinase superfamily. STE Ser/Thr protein kinase family. MAP kinase kinase kinase subfamily. In terms of assembly, homodimer. Binds to the GTPase rac1 but not cdc42 or rhoA. Interacts (via kinase domain) with pak1 (via kinase domain). Interacts with the ubiquitin-conjugating enzyme ube2d4. It depends on Mg(2+) as a cofactor. Post-translationally, autophosphorylation on serine and threonine residues within the activation loop plays a role in enzyme activation. In terms of processing, mono- and poly-ubiquitinated. As to expression, in adults, strongly expressed in the brain and spleen with lower levels in pancreas, heart, muscle and kidney (at protein level). In the developing embryo, expressed at stage 22 in the cement gland. Weakly expressed in the pronephros from stage 24 or 25, with expression increasing in strength by stage 30 and continuing at least until stage 37. Expression in the developing pronephros correlates with epithelialization of the proximal pronephric tubules.

It catalyses the reaction L-seryl-[protein] + ATP = O-phospho-L-seryl-[protein] + ADP + H(+). The catalysed reaction is L-threonyl-[protein] + ATP = O-phospho-L-threonyl-[protein] + ADP + H(+). Its activity is regulated as follows. Homodimerization via the leucine zipper domains is required for autophosphorylation and subsequent activation. Its function is as follows. Activates the JUN N-terminal pathway. Essential for pronephros and cement gland development. The protein is Mitogen-activated protein kinase kinase kinase 10 (map3k10) of Xenopus laevis (African clawed frog).